The primary structure comprises 292 residues: Ribose import binding protein RbsB (292 aa).

The N-terminal stretch at 1 to 23 (MKKLTALTSAVLLGLAVSSSASA) is a signal peptide.

Belongs to the bacterial solute-binding protein 2 family. The complex is composed of an ATP-binding protein (RbsA), two transmembrane proteins (RbsC) and a solute-binding protein (RbsB).

The protein resides in the periplasm. In terms of biological role, part of the ABC transporter complex RbsABC involved in ribose import. Binds ribose. This chain is Ribose import binding protein RbsB (rbsB), found in Haemophilus influenzae (strain ATCC 51907 / DSM 11121 / KW20 / Rd).